The chain runs to 403 residues: Multifunctional CCA protein (403 aa).

The ATP site is built by Gly8 and Arg11. The CTP site is built by Gly8 and Arg11. Mg(2+) contacts are provided by Asp21 and Asp23. Arg91, Arg137, and Arg140 together coordinate ATP. Residues Arg91, Arg137, and Arg140 each contribute to the CTP site. Residues 228-329 (TGIHTLMVAK…LKVLGLLDVW (102 aa)) enclose the HD domain.

This sequence belongs to the tRNA nucleotidyltransferase/poly(A) polymerase family. Bacterial CCA-adding enzyme type 1 subfamily. As to quaternary structure, monomer. Can also form homodimers and oligomers. The cofactor is Mg(2+). Ni(2+) serves as cofactor.

It carries out the reaction a tRNA precursor + 2 CTP + ATP = a tRNA with a 3' CCA end + 3 diphosphate. The enzyme catalyses a tRNA with a 3' CCA end + 2 CTP + ATP = a tRNA with a 3' CCACCA end + 3 diphosphate. In terms of biological role, catalyzes the addition and repair of the essential 3'-terminal CCA sequence in tRNAs without using a nucleic acid template. Adds these three nucleotides in the order of C, C, and A to the tRNA nucleotide-73, using CTP and ATP as substrates and producing inorganic pyrophosphate. tRNA 3'-terminal CCA addition is required both for tRNA processing and repair. Also involved in tRNA surveillance by mediating tandem CCA addition to generate a CCACCA at the 3' terminus of unstable tRNAs. While stable tRNAs receive only 3'-terminal CCA, unstable tRNAs are marked with CCACCA and rapidly degraded. The chain is Multifunctional CCA protein from Vibrio cholerae serotype O1 (strain ATCC 39315 / El Tor Inaba N16961).